A 273-amino-acid chain; its full sequence is Major prion protein homolog (273 aa).

Residues Met1–Ser24 form the signal peptide. Positions Lys25 to Asn121 are disordered. 8 repeat units span residues Arg42–Pro47, Arg48–Pro53, His54–Pro59, His60–Pro65, His66–Pro71, His72–Pro77, His78–Pro83, and Gln84–Pro89. Residues Arg42–Pro89 are 8 X 6 AA tandem repeats of [HR]-[NQ]-P-G-Y-P. The segment covering Gly51–Tyr94 has biased composition (low complexity). Positions 66, 72, and 78 each coordinate Cu(2+). The Cu(2+) site is built by His90 and Gly93. Residues Tyr101–Asn111 show a composition bias toward polar residues. A disulfide bond links Cys192 and Cys237. Asn194, Asn209, and Asn218 each carry an N-linked (GlcNAc...) asparagine glycan. Ser248 carries the GPI-anchor amidated serine lipid modification. The propeptide at Gly249–His273 is removed in mature form.

Belongs to the prion family. As to quaternary structure, monomer and homodimer. Has a tendency to aggregate into amyloid fibrils containing a cross-beta spine, formed by a steric zipper of superposed beta-strands. Soluble oligomers may represent an intermediate stage on the path to fibril formation. Copper binding may promote oligomerization. Spinal cord and brain.

The protein resides in the cell membrane. Its primary physiological function is unclear. Has cytoprotective activity against internal or environmental stresses. May play a role in neuronal development and synaptic plasticity. May be required for neuronal myelin sheath maintenance. May play a role in iron uptake and iron homeostasis. Soluble oligomers are toxic to cultured neuroblastoma cells and induce apoptosis (in vitro). Association with GPC1 (via its heparan sulfate chains) targets PRNP to lipid rafts. Also provides Cu(2+) or Zn(2+) for the ascorbate-mediated GPC1 deaminase degradation of its heparan sulfate side chains. This is Major prion protein homolog (PRNP) from Gallus gallus (Chicken).